Consider the following 282-residue polypeptide: GDT1-like protein 4 (282 aa).

Positions 1 to 26 (MARRVSTTRLLLLLLLVAAAAAAAAA) are cleaved as a signal peptide. 6 helical membrane passes run 67 to 87 (AGLG…VSEI), 106 to 126 (TVLS…TGLG), 138 to 158 (TNSA…YIAW), 189 to 209 (IFSR…FLAE), 227 to 247 (AVGV…FAVV), and 259 to 279 (GTVA…SYFY).

Belongs to the GDT1 family.

The protein resides in the membrane. This chain is GDT1-like protein 4, found in Oryza sativa subsp. japonica (Rice).